A 236-amino-acid polypeptide reads, in one-letter code: MHQNTNVDPQEIAKFERMAETWWDLNGEFKPLHLLNPLRLNYIDQTAGGIFGKKVLDVGCGGGILSESMARIGAEVDGLDMGDEPLEVARLHALETGVSINYVKNTAETHSQDHQAYYDVVTCMEMLEHVPDPQSVIKACCDMVKPGGFVFFSTINRNIKSYVHTILGAEYLLKMLPVGTHEHKKFIKPSELIELVDNTDLICTDALGISYNPLTGIFKYTPKVDVNYMIATRKVD.

Arginine 39, glycine 59, aspartate 80, and methionine 124 together coordinate S-adenosyl-L-methionine.

The protein belongs to the methyltransferase superfamily. UbiG/COQ3 family.

It carries out the reaction a 3-demethylubiquinol + S-adenosyl-L-methionine = a ubiquinol + S-adenosyl-L-homocysteine + H(+). It catalyses the reaction a 3-(all-trans-polyprenyl)benzene-1,2-diol + S-adenosyl-L-methionine = a 2-methoxy-6-(all-trans-polyprenyl)phenol + S-adenosyl-L-homocysteine + H(+). The protein operates within cofactor biosynthesis; ubiquinone biosynthesis. Functionally, O-methyltransferase that catalyzes the 2 O-methylation steps in the ubiquinone biosynthetic pathway. The protein is Ubiquinone biosynthesis O-methyltransferase of Shewanella baltica (strain OS223).